A 338-amino-acid chain; its full sequence is Phospho-2-dehydro-3-deoxyheptonate aldolase (338 aa).

It belongs to the class-I DAHP synthase family. Homotetramer. It depends on a divalent metal cation as a cofactor.

The catalysed reaction is D-erythrose 4-phosphate + phosphoenolpyruvate + H2O = 7-phospho-2-dehydro-3-deoxy-D-arabino-heptonate + phosphate. Its pathway is metabolic intermediate biosynthesis; chorismate biosynthesis; chorismate from D-erythrose 4-phosphate and phosphoenolpyruvate: step 1/7. With respect to regulation, inhibited by L-phenylalanine and L-tyrosine. Its function is as follows. Catalyzes the condensation of phosphoenolpyruvate (PEP) and D-erythrose-4-phosphate (E4P) giving rise to 3-deoxy-D-arabino-heptulosonate-7-phosphate (DAHP). The protein is Phospho-2-dehydro-3-deoxyheptonate aldolase (aroF) of Thermotoga maritima (strain ATCC 43589 / DSM 3109 / JCM 10099 / NBRC 100826 / MSB8).